A 179-amino-acid polypeptide reads, in one-letter code: Large ribosomal subunit protein uL5 (179 aa).

The protein belongs to the universal ribosomal protein uL5 family. In terms of assembly, part of the 50S ribosomal subunit; part of the 5S rRNA/L5/L18/L25 subcomplex. Contacts the 5S rRNA and the P site tRNA. Forms a bridge to the 30S subunit in the 70S ribosome.

This is one of the proteins that bind and probably mediate the attachment of the 5S RNA into the large ribosomal subunit, where it forms part of the central protuberance. In the 70S ribosome it contacts protein S13 of the 30S subunit (bridge B1b), connecting the 2 subunits; this bridge is implicated in subunit movement. Contacts the P site tRNA; the 5S rRNA and some of its associated proteins might help stabilize positioning of ribosome-bound tRNAs. The polypeptide is Large ribosomal subunit protein uL5 (Thioalkalivibrio sulfidiphilus (strain HL-EbGR7)).